A 156-amino-acid polypeptide reads, in one-letter code: Endogenous retrovirus group K member 18 Pro protein (156 aa).

Positions L21–L96 constitute a Peptidase A2 domain. D26 is an active-site residue. The region spanning Y111–F156 is the G-patch domain.

Belongs to the peptidase A2 family. HERV class-II K(HML-2) subfamily. As to quaternary structure, active as a homodimer. Autoproteolytically processed at the N-terminus. Expected C-terminal autoprocessing not detected. The sequence shown is that of the processed Pro protein.

It catalyses the reaction Processing at the authentic HIV-1 PR recognition site and release of the mature p17 matrix and the p24 capsid protein, as a result of the cleavage of the -SQNY-|-PIVQ- cleavage site.. Its function is as follows. Retroviral proteases have roles in the processing of the primary translation products and the maturation of the viral particle. Endogenous Pro proteins may have kept, lost or modified their original function during evolution. The chain is Endogenous retrovirus group K member 18 Pro protein (ERVK-18) from Homo sapiens (Human).